The primary structure comprises 213 residues: Phosphoheptose isomerase (213 aa).

The region spanning 50–208 (MAETFEGGGR…IDLVERMLGY (159 aa)) is the SIS domain. 65-67 (NGG) contacts substrate. Zn(2+) contacts are provided by His-74 and Glu-78. Substrate-binding positions include Glu-78, 109–110 (ND), 135–137 (STS), Ser-140, and Gln-188. Zn(2+)-binding residues include Gln-188 and His-196.

Belongs to the SIS family. GmhA subfamily. The cofactor is Zn(2+).

It localises to the cytoplasm. It carries out the reaction 2 D-sedoheptulose 7-phosphate = D-glycero-alpha-D-manno-heptose 7-phosphate + D-glycero-beta-D-manno-heptose 7-phosphate. It participates in carbohydrate biosynthesis; D-glycero-D-manno-heptose 7-phosphate biosynthesis; D-glycero-alpha-D-manno-heptose 7-phosphate and D-glycero-beta-D-manno-heptose 7-phosphate from sedoheptulose 7-phosphate: step 1/1. In terms of biological role, catalyzes the isomerization of sedoheptulose 7-phosphate in D-glycero-D-manno-heptose 7-phosphate. In Chlorobium phaeovibrioides (strain DSM 265 / 1930) (Prosthecochloris vibrioformis (strain DSM 265)), this protein is Phosphoheptose isomerase.